Consider the following 394-residue polypeptide: NAD(P)H-quinone oxidoreductase subunit H (394 aa).

Belongs to the complex I 49 kDa subunit family. As to quaternary structure, NDH-1 can be composed of about 15 different subunits; different subcomplexes with different compositions have been identified which probably have different functions.

The protein resides in the cellular thylakoid membrane. It catalyses the reaction a plastoquinone + NADH + (n+1) H(+)(in) = a plastoquinol + NAD(+) + n H(+)(out). The catalysed reaction is a plastoquinone + NADPH + (n+1) H(+)(in) = a plastoquinol + NADP(+) + n H(+)(out). NDH-1 shuttles electrons from an unknown electron donor, via FMN and iron-sulfur (Fe-S) centers, to quinones in the respiratory and/or the photosynthetic chain. The immediate electron acceptor for the enzyme in this species is believed to be plastoquinone. Couples the redox reaction to proton translocation, and thus conserves the redox energy in a proton gradient. Cyanobacterial NDH-1 also plays a role in inorganic carbon-concentration. The sequence is that of NAD(P)H-quinone oxidoreductase subunit H from Trichodesmium erythraeum (strain IMS101).